The sequence spans 91 residues: Small ribosomal subunit protein bS20 (91 aa).

The tract at residues 1–28 (MPNIKSAIKRTKTIEKRRAHRASQKSDL) is disordered. The span at 7–23 (AIKRTKTIEKRRAHRAS) shows a compositional bias: basic residues.

Belongs to the bacterial ribosomal protein bS20 family.

Functionally, binds directly to 16S ribosomal RNA. This chain is Small ribosomal subunit protein bS20, found in Brevibacillus brevis (strain 47 / JCM 6285 / NBRC 100599).